Consider the following 444-residue polypeptide: tRNA modification GTPase MnmE (444 aa).

3 residues coordinate (6S)-5-formyl-5,6,7,8-tetrahydrofolate: Arg-28, Glu-86, and Arg-126. In terms of domain architecture, TrmE-type G spans 224 to 368 (GFCVVLAGAP…LLDAIQGSAA (145 aa)). A K(+)-binding site is contributed by Asn-234. GTP contacts are provided by residues 234 to 239 (NAGKST), 253 to 259 (SDIPGTT), and 278 to 281 (DTAG). Ser-238 is a Mg(2+) binding site. The K(+) site is built by Ser-253, Ile-255, and Thr-258. Position 259 (Thr-259) interacts with Mg(2+). Lys-444 is a (6S)-5-formyl-5,6,7,8-tetrahydrofolate binding site.

This sequence belongs to the TRAFAC class TrmE-Era-EngA-EngB-Septin-like GTPase superfamily. TrmE GTPase family. Homodimer. Heterotetramer of two MnmE and two MnmG subunits. K(+) serves as cofactor.

It is found in the cytoplasm. Its function is as follows. Exhibits a very high intrinsic GTPase hydrolysis rate. Involved in the addition of a carboxymethylaminomethyl (cmnm) group at the wobble position (U34) of certain tRNAs, forming tRNA-cmnm(5)s(2)U34. The protein is tRNA modification GTPase MnmE of Methylorubrum populi (strain ATCC BAA-705 / NCIMB 13946 / BJ001) (Methylobacterium populi).